Reading from the N-terminus, the 189-residue chain is UPF0312 protein VV2_0231 (189 aa).

The N-terminal stretch at methionine 1–alanine 22 is a signal peptide.

Belongs to the UPF0312 family. Type 1 subfamily.

The protein resides in the periplasm. The protein is UPF0312 protein VV2_0231 of Vibrio vulnificus (strain CMCP6).